We begin with the raw amino-acid sequence, 156 residues long: Type IV major fimbrial protein FimA (156 aa).

Positions 1-7 (MKSLQKG) are cleaved as a propeptide — leader sequence. At Phe8 the chain carries N-methylphenylalanine. A helical transmembrane segment spans residues 8–28 (FTLIELMIVVAIIGILAAIAI). 2 disulfide bridges follow: Cys57–Cys67 and Cys141–Cys154.

It belongs to the N-Me-Phe pilin family. In terms of assembly, the pili are polar flexible filaments of about 5.4 nanometers diameter and 2.5 micrometers average length; they consist of only a single polypeptide chain arranged in a helical configuration of five subunits per turn in the assembled pilus.

It is found in the fimbrium. It localises to the membrane. In terms of biological role, major component of the type IV fimbriae that plays an essential role in twitching motility, natural transformation, and protease secretion. The polypeptide is Type IV major fimbrial protein FimA (fimA) (Dichelobacter nodosus (Bacteroides nodosus)).